Reading from the N-terminus, the 1463-residue chain is DNA polymerase III PolC-type (1463 aa).

In terms of domain architecture, Exonuclease spans 425-581; that stretch reads YVVFDVETTG…YDAEATGRLL (157 aa).

Belongs to the DNA polymerase type-C family. PolC subfamily.

The protein resides in the cytoplasm. It carries out the reaction DNA(n) + a 2'-deoxyribonucleoside 5'-triphosphate = DNA(n+1) + diphosphate. Required for replicative DNA synthesis. This DNA polymerase also exhibits 3' to 5' exonuclease activity. The polypeptide is DNA polymerase III PolC-type (Streptococcus pneumoniae serotype 2 (strain D39 / NCTC 7466)).